The primary structure comprises 310 residues: Methionyl-tRNA formyltransferase (310 aa).

109-112 (SLLP) is a binding site for (6S)-5,6,7,8-tetrahydrofolate.

The protein belongs to the Fmt family.

It carries out the reaction L-methionyl-tRNA(fMet) + (6R)-10-formyltetrahydrofolate = N-formyl-L-methionyl-tRNA(fMet) + (6S)-5,6,7,8-tetrahydrofolate + H(+). Functionally, attaches a formyl group to the free amino group of methionyl-tRNA(fMet). The formyl group appears to play a dual role in the initiator identity of N-formylmethionyl-tRNA by promoting its recognition by IF2 and preventing the misappropriation of this tRNA by the elongation apparatus. This is Methionyl-tRNA formyltransferase from Agathobacter rectalis (strain ATCC 33656 / DSM 3377 / JCM 17463 / KCTC 5835 / VPI 0990) (Eubacterium rectale).